The primary structure comprises 326 residues: Hairy/enhancer-of-split related with YRPW motif-like protein (326 aa).

The segment at 1 to 56 (MKRPRAPSGSDGESDGPIDVGQENDLSQMARPLTTPSPSQMQARKKRRGIIEKRRR) is disordered. The tract at residues 42-111 (QARKKRRGII…GGTGFFDARA (70 aa)) is transcriptional repression and interaction with NCOR1 and SIN3A. In terms of domain architecture, bHLH spans 43-98 (ARKKRRGIIEKRRRDRINSSLSELRRLVPTAFEKQGSSKLEKAEVLQMTVDHLKML). Residues 116 to 153 (FRSIGFRECLTEVIRYLGVLEGPSSHADPVRIRLLSHL) enclose the Orange domain. Disordered stretches follow at residues 223–260 (HRPA…PPPT) and 272–306 (PIPP…PTGR). Positions 292 to 305 (SGSISSPCPSGPTG) are enriched in low complexity.

Belongs to the HEY family. In terms of assembly, interacts with HES1, HDAC1, NCOR1 and SIN3A. Self-associates. Interacts with GATA4, GATA6, HEY1 and HEY2. Expressed in heart and at lower levels in brain, lung, muscle, ovary and testis.

The protein localises to the nucleus. Its function is as follows. Transcriptional repressor which binds preferentially to the canonical E box sequence 5'-CACGTG-3'. Downstream effector of Notch signaling required for cardiovascular development. Specifically required for the Notch-induced endocardial epithelial to mesenchymal transition, which is itself criticial for cardiac valve and septum development. Represses transcription by the cardiac transcriptional activators GATA4 and GATA6. This Mus musculus (Mouse) protein is Hairy/enhancer-of-split related with YRPW motif-like protein (Heyl).